We begin with the raw amino-acid sequence, 1420 residues long: MKDLVKFLKAQSKTSEDFDVIKIGLASPDMIRSWSYGEVKKPETINYRTFKPERDGLFCARIFGPVKDYECLCGKYKRLKHRGVICEKCGVEVTQAKVRRERMGHIELASPVAHIWFLKSLPSRIGLLLDMPLRDIERVLYFESYIVIEPGMTDLERGQLLTEEQFLDAEDRWQDEFDAKMGAEAIQALLRDMDLEVECETLREELQSTNSETKRKKITKRLKLLESFIQSGNKPEWMVMTVLPVLPPDLRPLVPLDGGRFATSDLNDLYRRVINRNNRLKRLLDLIAPDIIVRNEKRMLQESVDALLDNGRRGRAITGSNRRPLKSLADMIKGKQGRFRQNLLGKRVDYSGRSVITVGPYLHLHQCGLPKKMALELFRPFIYAKLESRGFATTIKAAKKMVEREDAIVWDILADVIREHPILLNRAPTLHRLGIQAFEPILIEGKAIQLHPLVCAAFNADFDGDQMAVHVPLTLEAQLEARALMMSTNNILSPANGEPIIVPSQDVVLGLYYMTRDKVNGKGEGMLLQDSREAEKAYRTGQAELHSRVKVRITEYVKNAIGEFEPQTHLVDTTIGRAILWMIAPKGMPFSLFNQTLGKKAISKLINESYRRLGLKESVLFADHIMYTGFAYAARSGSSVGIDDMVIPQKKYEIISAAEEEVAEIQEQFQSGLVTAGERYNKVIDIWAAANERVAKAMMENLSQEEVINREGQPEKQASFNSIFMMADSGARGSAAQIRQLAGMRGLMARPDGSIIETPITANFREGLNVLQYFISTHGARKGLADTALKTANSGYLTRRLVDVAQDLVIIEDDCGTHEGIVMTPLIEGGDVKEALRDRVLGRVAAEDILKPGTNEVLISRNTLLDEKLCDVIDENSVDSIKVRSVVTCDTDFGVCAKCYGRDLARGHLINQGEAVGVIAAQSIGEPGTQLTMRTFHIGGAASAAAKESSVQVKNTGTLRLTNVKFVTNKEGKLVLTSRNTELTIIDTFGRTKEHYKVPYGAVLNHADGEEVTAGETVANWDPHTMPVISEVSGFVKFVEIVDGLTVTRQTDELTGLSSIVVQDVGERATAGKDLRPALKLVDAQGNDIFIPGTDVMAQYFLPGKAIVTLDDGAEVFVGEPLARIPQESVGTKDITGGLPRVADLFEARKPKEPAILAEISGIVSFGKETKGKRRLLITPMEGETYEEMIPKWRQLNVFEGELVQRGDLISDGAETPHDILRLRGVHAVTDYIVNEVQEVYRLQGVKINDKHIEVIVRQMLRKAIITNAYDSEFLEGEQVEVARVKIVNRKRAEEGKPLVEFERELLGITKASLATESFISAASFQETTRVLTEAAVAGKRDELRGLKENVIVGRLIPAGTGFAYHQNRQKNRLVGGMENTTEVKLSAVDEEEIASEFTFSAEDATANLAEMLNMADDAE.

Residues Cys71, Cys73, Cys86, and Cys89 each contribute to the Zn(2+) site. Mg(2+) contacts are provided by Asp461, Asp463, and Asp465. Residues Cys815, Cys889, Cys896, and Cys899 each contribute to the Zn(2+) site.

It belongs to the RNA polymerase beta' chain family. In terms of assembly, the RNAP catalytic core consists of 2 alpha, 1 beta, 1 beta' and 1 omega subunit. When a sigma factor is associated with the core the holoenzyme is formed, which can initiate transcription. Requires Mg(2+) as cofactor. Zn(2+) serves as cofactor.

The enzyme catalyses RNA(n) + a ribonucleoside 5'-triphosphate = RNA(n+1) + diphosphate. Its function is as follows. DNA-dependent RNA polymerase catalyzes the transcription of DNA into RNA using the four ribonucleoside triphosphates as substrates. The polypeptide is DNA-directed RNA polymerase subunit beta' (Histophilus somni (strain 129Pt) (Haemophilus somnus)).